The primary structure comprises 581 residues: Proline--tRNA ligase (581 aa).

It belongs to the class-II aminoacyl-tRNA synthetase family. ProS type 1 subfamily. As to quaternary structure, homodimer.

It localises to the cytoplasm. The catalysed reaction is tRNA(Pro) + L-proline + ATP = L-prolyl-tRNA(Pro) + AMP + diphosphate. Functionally, catalyzes the attachment of proline to tRNA(Pro) in a two-step reaction: proline is first activated by ATP to form Pro-AMP and then transferred to the acceptor end of tRNA(Pro). As ProRS can inadvertently accommodate and process non-cognate amino acids such as alanine and cysteine, to avoid such errors it has two additional distinct editing activities against alanine. One activity is designated as 'pretransfer' editing and involves the tRNA(Pro)-independent hydrolysis of activated Ala-AMP. The other activity is designated 'posttransfer' editing and involves deacylation of mischarged Ala-tRNA(Pro). The misacylated Cys-tRNA(Pro) is not edited by ProRS. This is Proline--tRNA ligase from Verminephrobacter eiseniae (strain EF01-2).